Here is a 252-residue protein sequence, read N- to C-terminus: tRNA (guanine-N(1)-)-methyltransferase (252 aa).

S-adenosyl-L-methionine-binding positions include Gly-113 and 133–138; that span reads LGDYVL.

This sequence belongs to the RNA methyltransferase TrmD family. As to quaternary structure, homodimer.

It is found in the cytoplasm. The catalysed reaction is guanosine(37) in tRNA + S-adenosyl-L-methionine = N(1)-methylguanosine(37) in tRNA + S-adenosyl-L-homocysteine + H(+). Specifically methylates guanosine-37 in various tRNAs. This is tRNA (guanine-N(1)-)-methyltransferase from Stenotrophomonas maltophilia (strain K279a).